A 312-amino-acid polypeptide reads, in one-letter code: Very-long-chain 3-oxoacyl-CoA reductase (312 aa).

Helical transmembrane passes span 33–53 (VWGIGAGRAALGPGLGAWAVV), 181–201 (GVILNISSAAGMYPTPLLTLY), and 274–294 (HAFMGWVFSILPTSTVMNLLM). 48 to 77 (GAWAVVTGATDGIGKAYAKELAKRGMKVAL) lines the NADP(+) pocket. Ser188 is a substrate binding site. Residue Tyr201 is the Proton acceptor of the active site.

It belongs to the short-chain dehydrogenases/reductases (SDR) family. 17-beta-HSD 3 subfamily. Brain.

Its subcellular location is the endoplasmic reticulum membrane. The enzyme catalyses a very-long-chain (3R)-3-hydroxyacyl-CoA + NADP(+) = a very-long-chain 3-oxoacyl-CoA + NADPH + H(+). The catalysed reaction is 17beta-estradiol + NAD(+) = estrone + NADH + H(+). It carries out the reaction 17beta-estradiol + NADP(+) = estrone + NADPH + H(+). It catalyses the reaction 3-oxooctadecanoyl-CoA + NADPH + H(+) = (3R)-hydroxyoctadecanoyl-CoA + NADP(+). The enzyme catalyses (7Z,10Z,13Z,16Z)-3-oxodocosatetraenoyl-CoA + NADPH + H(+) = (3R)-hydroxy-(7Z,10Z,13Z,16Z)-docosatetraenoyl-CoA + NADP(+). The catalysed reaction is 3-oxo-(7Z,10Z,13Z,16Z,19Z)-docosapentaenoyl-CoA + NADPH + H(+) = (3R)-hydroxy-(7Z,10Z,13Z,16Z,19Z)-docosapentaenoyl-CoA + NADP(+). It carries out the reaction (8Z,11Z,14Z)-3-oxoeicosatrienoyl-CoA + NADPH + H(+) = (3R)-hydroxy-(8Z,11Z,14Z)-eicosatrienoyl-CoA + NADP(+). The protein operates within lipid metabolism; fatty acid biosynthesis. Its pathway is steroid biosynthesis; estrogen biosynthesis. Its function is as follows. Catalyzes the second of the four reactions of the long-chain fatty acids elongation cycle. This endoplasmic reticulum-bound enzymatic process, allows the addition of two carbons to the chain of long- and very long-chain fatty acids/VLCFAs per cycle. This enzyme has a 3-ketoacyl-CoA reductase activity, reducing 3-ketoacyl-CoA to 3-hydroxyacyl-CoA, within each cycle of fatty acid elongation. Thereby, it may participate in the production of VLCFAs of different chain lengths that are involved in multiple biological processes as precursors of membrane lipids and lipid mediators. May also catalyze the transformation of estrone (E1) into estradiol (E2) and play a role in estrogen formation. The sequence is that of Very-long-chain 3-oxoacyl-CoA reductase (HSD17B12) from Anas platyrhynchos (Mallard).